The sequence spans 461 residues: Argininosuccinate lyase (461 aa).

It belongs to the lyase 1 family. Argininosuccinate lyase subfamily.

The protein localises to the cytoplasm. The enzyme catalyses 2-(N(omega)-L-arginino)succinate = fumarate + L-arginine. It functions in the pathway amino-acid biosynthesis; L-arginine biosynthesis; L-arginine from L-ornithine and carbamoyl phosphate: step 3/3. The protein is Argininosuccinate lyase of Streptococcus gordonii (strain Challis / ATCC 35105 / BCRC 15272 / CH1 / DL1 / V288).